The sequence spans 221 residues: Germin-like protein subfamily 1 member 19 (221 aa).

The first 21 residues, 1–21, serve as a signal peptide directing secretion; that stretch reads MKVSMSLILITLSALVTIAKA. An intrachain disulfide couples cysteine 31 to cysteine 48. The Cupin type-1 domain maps to 76–213; it reads SNVTTVNVDQ…AFQLDVNVVK (138 aa). N-linked (GlcNAc...) asparagine glycosylation is present at asparagine 77. 4 residues coordinate Mn(2+): histidine 110, histidine 112, glutamate 117, and histidine 159.

Belongs to the germin family. Oligomer (believed to be a pentamer but probably hexamer).

The protein localises to the secreted. It is found in the extracellular space. The protein resides in the apoplast. In terms of biological role, may play a role in plant defense. Probably has no oxalate oxidase activity even if the active site is conserved. In Arabidopsis thaliana (Mouse-ear cress), this protein is Germin-like protein subfamily 1 member 19.